A 436-amino-acid chain; its full sequence is Putative ankyrin repeat protein FPV026 (436 aa).

6 ANK repeats span residues 63-92 (EGIR…NVNE), 101-130 (TCYS…DVNN), 135-164 (LRNT…DQNI), 168-197 (NGNI…NLEI), 201-230 (NGRT…LVDS), and 234-266 (EGYT…FLNI). In terms of domain architecture, F-box spans 409–436 (TSTITNLPYEVIYIIVEKMTNKELCEIR).

This is Putative ankyrin repeat protein FPV026 from Fowlpox virus (strain NVSL) (FPV).